Consider the following 149-residue polypeptide: SsrA-binding protein (149 aa).

This sequence belongs to the SmpB family.

It localises to the cytoplasm. Its function is as follows. Required for rescue of stalled ribosomes mediated by trans-translation. Binds to transfer-messenger RNA (tmRNA), required for stable association of tmRNA with ribosomes. tmRNA and SmpB together mimic tRNA shape, replacing the anticodon stem-loop with SmpB. tmRNA is encoded by the ssrA gene; the 2 termini fold to resemble tRNA(Ala) and it encodes a 'tag peptide', a short internal open reading frame. During trans-translation Ala-aminoacylated tmRNA acts like a tRNA, entering the A-site of stalled ribosomes, displacing the stalled mRNA. The ribosome then switches to translate the ORF on the tmRNA; the nascent peptide is terminated with the 'tag peptide' encoded by the tmRNA and targeted for degradation. The ribosome is freed to recommence translation, which seems to be the essential function of trans-translation. The polypeptide is SsrA-binding protein (Mesoplasma florum (strain ATCC 33453 / NBRC 100688 / NCTC 11704 / L1) (Acholeplasma florum)).